The chain runs to 241 residues: MSKVDVAVTIAPKEEITDQLKKDLIREQKSIDIIELRIDQRESFEIADLERLFKTLKDLQLDVQVLVTYRTSVQGGKGQKNGNTYYEFLQDLIQIQGYDMVDIEWDEAQTEILLQLIVQAQSAGLKVVLSQHDFDKTPNLEVLKFLYFKMNKLGADIVKLAVMPNEKQDVLNLLEALATASESIEAKPVGISMSHLGLISRTAQGVFGGIISYGCLGTPQAPGQIHVGQLKELLNIYEINK.

3-dehydroquinate contacts are provided by residues 35 to 37 (ELR) and Arg-70. Catalysis depends on His-132, which acts as the Proton donor/acceptor. Lys-159 acts as the Schiff-base intermediate with substrate in catalysis. 3-dehydroquinate contacts are provided by Arg-201 and Gln-224.

The protein belongs to the type-I 3-dehydroquinase family. Homodimer.

It carries out the reaction 3-dehydroquinate = 3-dehydroshikimate + H2O. It participates in metabolic intermediate biosynthesis; chorismate biosynthesis; chorismate from D-erythrose 4-phosphate and phosphoenolpyruvate: step 3/7. Involved in the third step of the chorismate pathway, which leads to the biosynthesis of aromatic amino acids. Catalyzes the cis-dehydration of 3-dehydroquinate (DHQ) and introduces the first double bond of the aromatic ring to yield 3-dehydroshikimate. This Staphylococcus carnosus (strain TM300) protein is 3-dehydroquinate dehydratase.